Here is a 122-residue protein sequence, read N- to C-terminus: Large ribosomal subunit protein uL14 (122 aa).

This sequence belongs to the universal ribosomal protein uL14 family. As to quaternary structure, part of the 50S ribosomal subunit. Forms a cluster with proteins L3 and L19. In the 70S ribosome, L14 and L19 interact and together make contacts with the 16S rRNA in bridges B5 and B8.

Functionally, binds to 23S rRNA. Forms part of two intersubunit bridges in the 70S ribosome. The chain is Large ribosomal subunit protein uL14 from Methylococcus capsulatus (strain ATCC 33009 / NCIMB 11132 / Bath).